The sequence spans 70 residues: Beta-defensin 107A (70 aa).

A signal peptide spans 1 to 26 (MPGAMKIFFFIFAALILLAQIFQART). 2 cysteine pairs are disulfide-bonded: cysteine 41–cysteine 55 and cysteine 45–cysteine 64.

It belongs to the beta-defensin family.

Its subcellular location is the secreted. Functionally, has antibacterial activity. The protein is Beta-defensin 107A (DEFB107A) of Pan troglodytes (Chimpanzee).